A 141-amino-acid chain; its full sequence is Hemoglobin subunit alpha-1 (141 aa).

The Globin domain occupies 1–141 (VLSEGNKKAI…VTYQLSSLYR (141 aa)). His59 contacts O2. His88 serves as a coordination point for heme b.

The protein belongs to the globin family. As to quaternary structure, heterotetramer of two alpha chains and two beta chains. As to expression, red blood cells.

In terms of biological role, involved in oxygen transport from the lung to the various peripheral tissues. In Torpedo marmorata (Marbled electric ray), this protein is Hemoglobin subunit alpha-1.